The primary structure comprises 143 residues: Transcriptional regulator MraZ (143 aa).

SpoVT-AbrB domains lie at 5 to 47 (EYKH…SLKE) and 76 to 119 (ACEC…SENN).

Belongs to the MraZ family. In terms of assembly, forms oligomers.

It is found in the cytoplasm. The protein resides in the nucleoid. This chain is Transcriptional regulator MraZ, found in Caldicellulosiruptor bescii (strain ATCC BAA-1888 / DSM 6725 / KCTC 15123 / Z-1320) (Anaerocellum thermophilum).